The primary structure comprises 202 residues: Sterile alpha motif domain-containing protein 10 (202 aa).

Residues 1–22 (MFTELRSKLSPPRARAGAVRPG) are disordered. Positions 118 to 184 (WSQQDVCKWL…LQQVLHLQVR (67 aa)) constitute an SAM domain.

This Mus musculus (Mouse) protein is Sterile alpha motif domain-containing protein 10.